Reading from the N-terminus, the 129-residue chain is MKSVQFCFLFCCWRAICCRSCELTNITITVEKEECGFCISINTTWCAGYCYTRDLVYRDPARPNIQKTCTYKELVYETVKVPGCAHHADSLYTYPVATECQCGKCDGDSTDCTVRGLGPSYCSFSESRE.

The signal sequence occupies residues 1–20 (MKSVQFCFLFCCWRAICCRS). 6 disulfide bridges follow: C21–C69, C35–C84, C38–C122, C46–C100, C50–C102, and C105–C112. N-linked (GlcNAc...) asparagine glycosylation is found at N25 and N42.

The protein belongs to the glycoprotein hormones subunit beta family. As to quaternary structure, heterodimer. The active follitropin is a heterodimer composed of an alpha chain/CGA shared with other hormones and a unique beta chain/FSHB shown here.

The protein resides in the secreted. Functionally, together with the alpha chain CGA constitutes follitropin, the follicle-stimulating hormone, and provides its biological specificity to the hormone heterodimer. Binds FSHR, a G protein-coupled receptor, on target cells to activate downstream signaling pathways. Follitropin is involved in follicle development and spermatogenesis in reproductive organs. This chain is Follitropin subunit beta (FSHB), found in Bubalus bubalis (Domestic water buffalo).